The sequence spans 171 residues: Protein TraV (171 aa).

Positions 1–18 (MKQTSFFIPLLGTLLLYG) are cleaved as a signal peptide. Cys19 carries the N-palmitoyl cysteine lipid modification. Cys19 is lipidated: S-diacylglycerol cysteine.

It localises to the cell outer membrane. In terms of biological role, involved in F pilus assembly. Appears to facilitate the polymerization of inner membrane-located pilin subunits into extracellular F pilus filaments. This Escherichia coli (strain K12) protein is Protein TraV (traV).